A 664-amino-acid polypeptide reads, in one-letter code: Methionine--tRNA ligase (664 aa).

The short motif at 13–23 (PYTNGPCHLGH) is the 'HIGH' region element. Cysteine 144, cysteine 147, cysteine 156, and cysteine 160 together coordinate Zn(2+). Positions 327–331 (KFSKS) match the 'KMSKS' region motif. ATP is bound at residue lysine 330. A tRNA-binding domain is found at 566-664 (EFAKVEMKTG…TPVPSGTKIR (99 aa)).

Belongs to the class-I aminoacyl-tRNA synthetase family. MetG type 1 subfamily. Homodimer. Zn(2+) serves as cofactor.

The protein localises to the cytoplasm. It catalyses the reaction tRNA(Met) + L-methionine + ATP = L-methionyl-tRNA(Met) + AMP + diphosphate. Functionally, is required not only for elongation of protein synthesis but also for the initiation of all mRNA translation through initiator tRNA(fMet) aminoacylation. This Methanospirillum hungatei JF-1 (strain ATCC 27890 / DSM 864 / NBRC 100397 / JF-1) protein is Methionine--tRNA ligase.